The chain runs to 304 residues: Ribonuclease Z (304 aa).

Histidine 63, histidine 65, aspartate 67, histidine 68, histidine 141, aspartate 208, and histidine 266 together coordinate Zn(2+). Catalysis depends on aspartate 67, which acts as the Proton acceptor.

It belongs to the RNase Z family. Homodimer. Requires Zn(2+) as cofactor.

It catalyses the reaction Endonucleolytic cleavage of RNA, removing extra 3' nucleotides from tRNA precursor, generating 3' termini of tRNAs. A 3'-hydroxy group is left at the tRNA terminus and a 5'-phosphoryl group is left at the trailer molecule.. Its function is as follows. Zinc phosphodiesterase, which displays some tRNA 3'-processing endonuclease activity. Probably involved in tRNA maturation, by removing a 3'-trailer from precursor tRNA. This Chlamydia muridarum (strain MoPn / Nigg) protein is Ribonuclease Z.